Consider the following 110-residue polypeptide: UPF0339 protein SO_3888 (110 aa).

Repeat copies occupy residues 10–58 (SSND…RYAK) and 61–109 (AKND…IKDL).

The protein belongs to the UPF0339 family. Duplicated subfamily.

This chain is UPF0339 protein SO_3888, found in Shewanella oneidensis (strain ATCC 700550 / JCM 31522 / CIP 106686 / LMG 19005 / NCIMB 14063 / MR-1).